The primary structure comprises 290 residues: 7-methylguanosine phosphate-specific 5'-nucleotidase A (290 aa).

The active-site Nucleophile is D39. Residues D39 and D41 each coordinate Mg(2+). Catalysis depends on D41, which acts as the Proton donor. E86 contacts CMP. Position 86 (E86) interacts with N(7)-methyl-GMP. Residues 154–155 (SA) and K203 each bind substrate. D228 contributes to the Mg(2+) binding site.

Belongs to the pyrimidine 5'-nucleotidase family. In terms of assembly, monomer.

It is found in the cytoplasm. The catalysed reaction is N(7)-methyl-GMP + H2O = N(7)-methylguanosine + phosphate. It catalyses the reaction CMP + H2O = cytidine + phosphate. It carries out the reaction a ribonucleoside 5'-phosphate + H2O = a ribonucleoside + phosphate. Its function is as follows. Specifically hydrolyzes 7-methylguanosine monophosphate (m(7)GMP) to 7-methylguanosine and inorganic phosphate. The specific activity for m(7)GMP may protect cells against undesired salvage of m(7)GMP and its incorporation into nucleic acids. Also has weak activity for CMP. UMP and purine nucleotides are poor substrates. The protein is 7-methylguanosine phosphate-specific 5'-nucleotidase A (Nt5c3b-a) of Xenopus laevis (African clawed frog).